A 364-amino-acid chain; its full sequence is Programmed cell death protein 2-like (364 aa).

At Ala2 the chain carries N-acetylalanine. Positions 125–150 are disordered; that stretch reads EGSQDWGSDTEETPPPPASDLGSDSN.

Its function is as follows. Over-expression suppresses AP1, CREB, NFAT, and NF-kB transcriptional activation, and delays cell cycle progression at S phase. In Mus musculus (Mouse), this protein is Programmed cell death protein 2-like (Pdcd2l).